A 346-amino-acid chain; its full sequence is Phosphoribosylformylglycinamidine cyclo-ligase (346 aa).

It belongs to the AIR synthase family.

The protein resides in the cytoplasm. It catalyses the reaction 2-formamido-N(1)-(5-O-phospho-beta-D-ribosyl)acetamidine + ATP = 5-amino-1-(5-phospho-beta-D-ribosyl)imidazole + ADP + phosphate + H(+). It functions in the pathway purine metabolism; IMP biosynthesis via de novo pathway; 5-amino-1-(5-phospho-D-ribosyl)imidazole from N(2)-formyl-N(1)-(5-phospho-D-ribosyl)glycinamide: step 2/2. The sequence is that of Phosphoribosylformylglycinamidine cyclo-ligase from Shewanella halifaxensis (strain HAW-EB4).